We begin with the raw amino-acid sequence, 156 residues long: Cytochrome c-type biogenesis protein CcmE (156 aa).

The Cytoplasmic portion of the chain corresponds to methionine 1–arginine 16. Residues leucine 17–alanine 37 traverse the membrane as a helical; Signal-anchor for type II membrane protein segment. Residues leucine 38–lysine 156 lie on the Periplasmic side of the membrane. The heme site is built by histidine 131 and tyrosine 135.

This sequence belongs to the CcmE/CycJ family.

The protein resides in the cell inner membrane. Its function is as follows. Heme chaperone required for the biogenesis of c-type cytochromes. Transiently binds heme delivered by CcmC and transfers the heme to apo-cytochromes in a process facilitated by CcmF and CcmH. The chain is Cytochrome c-type biogenesis protein CcmE from Novosphingobium aromaticivorans (strain ATCC 700278 / DSM 12444 / CCUG 56034 / CIP 105152 / NBRC 16084 / F199).